A 143-amino-acid chain; its full sequence is Large ribosomal subunit protein uL15 (143 aa).

The tract at residues 1–59 is disordered; sequence MELNTITPGQGAKHAKRRVGRGIGSGLGKTAGRGHKGQKSRSGGYHKVGFEGGQMPMQR. The span at 21–31 shows a compositional bias: gly residues; sequence RGIGSGLGKTA.

This sequence belongs to the universal ribosomal protein uL15 family. Part of the 50S ribosomal subunit.

Functionally, binds to the 23S rRNA. This is Large ribosomal subunit protein uL15 from Polaromonas naphthalenivorans (strain CJ2).